Here is a 290-residue protein sequence, read N- to C-terminus: Small ribosomal subunit biogenesis GTPase RsgA (290 aa).

One can recognise a CP-type G domain in the interval 61 to 218 (SSELLRPAVA…IVDTPGFSTL (158 aa)). GTP is bound by residues 110–113 (NKVD) and 161–169 (GPSGAGKST). Residues Cys-243, Cys-248, His-250, and Cys-256 each contribute to the Zn(2+) site.

This sequence belongs to the TRAFAC class YlqF/YawG GTPase family. RsgA subfamily. In terms of assembly, monomer. Associates with 30S ribosomal subunit, binds 16S rRNA. Zn(2+) serves as cofactor.

The protein localises to the cytoplasm. Its function is as follows. One of several proteins that assist in the late maturation steps of the functional core of the 30S ribosomal subunit. Helps release RbfA from mature subunits. May play a role in the assembly of ribosomal proteins into the subunit. Circularly permuted GTPase that catalyzes slow GTP hydrolysis, GTPase activity is stimulated by the 30S ribosomal subunit. This chain is Small ribosomal subunit biogenesis GTPase RsgA, found in Clostridium botulinum (strain Eklund 17B / Type B).